Here is a 156-residue protein sequence, read N- to C-terminus: Transcription elongation factor GreA (156 aa).

Residues 46 to 66 (AEYHSAREKQSFIEGRIKELE) are a coiled coil.

This sequence belongs to the GreA/GreB family.

Necessary for efficient RNA polymerase transcription elongation past template-encoded arresting sites. The arresting sites in DNA have the property of trapping a certain fraction of elongating RNA polymerases that pass through, resulting in locked ternary complexes. Cleavage of the nascent transcript by cleavage factors such as GreA or GreB allows the resumption of elongation from the new 3'terminus. GreA releases sequences of 2 to 3 nucleotides. In Ruegeria pomeroyi (strain ATCC 700808 / DSM 15171 / DSS-3) (Silicibacter pomeroyi), this protein is Transcription elongation factor GreA.